Consider the following 317-residue polypeptide: Ribosomal RNA small subunit methyltransferase H (317 aa).

S-adenosyl-L-methionine contacts are provided by residues Gly36–His38, Asp56, Phe80, Asp102, and Gln109.

It belongs to the methyltransferase superfamily. RsmH family.

Its subcellular location is the cytoplasm. It catalyses the reaction cytidine(1402) in 16S rRNA + S-adenosyl-L-methionine = N(4)-methylcytidine(1402) in 16S rRNA + S-adenosyl-L-homocysteine + H(+). Its function is as follows. Specifically methylates the N4 position of cytidine in position 1402 (C1402) of 16S rRNA. This Baumannia cicadellinicola subsp. Homalodisca coagulata protein is Ribosomal RNA small subunit methyltransferase H.